The following is a 458-amino-acid chain: Succinate-semialdehyde dehydrogenase [NADP(+)] 1 (458 aa).

Residues 134–135, 158–161, and 210–211 contribute to the NADP(+) site; these read WN, KHAS, and GS. Residue Glu232 is the Proton acceptor of the active site. Leu233 lines the NADP(+) pocket. Cys266 functions as the Nucleophile in the catalytic mechanism. Glu363 lines the NADP(+) pocket.

This sequence belongs to the aldehyde dehydrogenase family.

It catalyses the reaction succinate semialdehyde + NADP(+) + H2O = succinate + NADPH + 2 H(+). Functionally, catalyzes the NADP(+)-dependent oxidation of succinate semialdehyde to succinate. It is believed to be the main source of succinate semialdehyde dehydrogenase activity in Mycobacterium. This Mycobacterium ulcerans (strain Agy99) protein is Succinate-semialdehyde dehydrogenase [NADP(+)] 1 (gabD1).